The sequence spans 888 residues: Pumilio homology domain family member 4 (888 aa).

Residues T205, T212, and T252 each carry the phosphothreonine modification. 2 disordered regions span residues 236 to 270 (KAKKPSVGANNTAKTRTQSISFDNTPSSTSFIPPT) and 467 to 551 (MNSA…RKIE). Over residues 243 to 270 (GANNTAKTRTQSISFDNTPSSTSFIPPT) the composition is skewed to polar residues. S256 carries the post-translational modification Phosphoserine. Low complexity-rich tracts occupy residues 478-499 (NNNSMSSHNDNDNIGNSNYNNK) and 521-543 (NNNNNNNNNNNNNNNSNATNSNS). Positions 539–888 (TNSNSAEKQR…RIIGMLHLDS (350 aa)) constitute a PUM-HD domain. Pumilio repeat units follow at residues 563 to 598 (QYIGSIHSLCKDQHGCRFLQKQLDILGSKAADAIFE), 599 to 634 (ETKDYTVELMTDSFGNYLIQKLLEEVTTEQRIVLTK), 635 to 671 (ISSPHFVEISLNPHGTRALQKLIECIKTDEEAQIVVD), 672 to 707 (SLRPYTVQLSKDLNGNHVIQKCLQRLKPENFQFIFD), 708 to 743 (AISDSCIDIATHRHGCCVLQRCLDHGTTEQCDNLCD), 744 to 783 (KLLALVDKLTLDPFGNYVVQYIITKEAEKNKYDYTHKIVH), 784 to 821 (LLKPRAIELSIHKFGSNVIEKILKTAIVSEPMILEILN), and 823 to 861 (GGETGIQSLLNDSYGNYVLQTALDISHKQNDYLYKRLSE).

Is not essential for haploid growth, but may affect diploid formation. The chain is Pumilio homology domain family member 4 (PUF4) from Saccharomyces cerevisiae (strain ATCC 204508 / S288c) (Baker's yeast).